The following is a 202-amino-acid chain: Small ribosomal subunit protein uS4 (202 aa).

Residues 23-42 (RKAARRSYPPGQHGQARRKR) are disordered. The S4 RNA-binding domain maps to 90 to 154 (MRLDNLVFRL…SRKLVTANLE (65 aa)).

The protein belongs to the universal ribosomal protein uS4 family. Part of the 30S ribosomal subunit. Contacts protein S5. The interaction surface between S4 and S5 is involved in control of translational fidelity.

Functionally, one of the primary rRNA binding proteins, it binds directly to 16S rRNA where it nucleates assembly of the body of the 30S subunit. With S5 and S12 plays an important role in translational accuracy. This Synechococcus elongatus (strain ATCC 33912 / PCC 7942 / FACHB-805) (Anacystis nidulans R2) protein is Small ribosomal subunit protein uS4.